The primary structure comprises 70 residues: Large ribosomal subunit protein bL31 (70 aa).

Zn(2+) contacts are provided by cysteine 16, cysteine 18, cysteine 37, and cysteine 40.

This sequence belongs to the bacterial ribosomal protein bL31 family. Type A subfamily. Part of the 50S ribosomal subunit. Zn(2+) is required as a cofactor.

Binds the 23S rRNA. In Cronobacter sakazakii (strain ATCC BAA-894) (Enterobacter sakazakii), this protein is Large ribosomal subunit protein bL31.